The primary structure comprises 730 residues: Protein groucho (730 aa).

Positions 144 to 411 are disordered; sequence QVPGGPPQPM…GKPAYSFHMN (268 aa). The span at 198-233 shows a compositional bias: basic and acidic residues; the sequence is AEERLRNSVSPADREKYRTRSPLDIENDSKRRKDEK. Residues Ser-205, Ser-207, and Ser-218 each carry the phosphoserine modification. The tract at residues 206–267 is CCN domain; the sequence is VSPADREKYR…SPRPNGEHVS (62 aa). Positions 227–230 match the Nuclear localization signal motif; sequence KRRK. Phosphoserine; by CK2 is present on Ser-242. Residues 254 to 283 show a composition bias toward basic and acidic residues; the sequence is MESHSPRPNGEHVSMEVRDRESLNGERLEK. Position 258 is a phosphoserine; by CDC2 (Ser-258). The segment at 262–425 is binding to basic helix-loop-helix domain; sequence NGEHVSMEVR…LQPVPFPPDA (164 aa). Ser-267 carries the post-translational modification Phosphoserine. Composition is skewed to low complexity over residues 296–308, 322–345, and 353–362; these read SRSG…STPS, AKAR…QMMP, and YPGAPYQRPA. 2 positions are modified to phosphothreonine: Thr-326 and Thr-328. The span at 366 to 382 shows a compositional bias: pro residues; that stretch reads QRPPSDPAYGRPPPMPY. WD repeat units lie at residues 442–480, 488–527, 532–571, 574–613, 615–654, 656–695, and 697–730; these read SHGE…NKNP, QRDN…PRIK, SAAP…LVRQ, GHTD…QLQQ, DFSS…KYQL, LHES…SIFQ, and KETS…EVIY.

Belongs to the WD repeat Groucho/TLE family. Forms a complex with the hairy/Enhancer of split/deadpan family of basic helix-loop-helix proteins in order to repress transcription. Its activity in regulating transcription depends on other proteins as it lacks a DNA-binding motif. Interacts with hairy/hry (via WRPW motif). Ubiquitinated by XIAP/BIRC4. Ubiquitinated by hyd in response to Wnt signaling, leading to degradation by the proteasome.

It localises to the nucleus. Its function is as follows. Transcriptional corepressor that regulates transcription when recruited to specific target DNA by hairy-related bHLH proteins. Maternally required for neurogenesis; in the segregation of the neuroectoderm. Directly or indirectly interacts with Notch and Delta. This Drosophila melanogaster (Fruit fly) protein is Protein groucho (gro).